Here is a 273-residue protein sequence, read N- to C-terminus: LOB domain-containing protein 20 (273 aa).

A compositionally biased stretch (basic and acidic residues) spans 1 to 15; sequence MADQQRGHNTSDSRR. Residues 1–39 form a disordered region; the sequence is MADQQRGHNTSDSRRKSLAGKRTSQQTPTSSLSSGGVSM. Residues 23 to 39 show a composition bias toward low complexity; it reads TSQQTPTSSLSSGGVSM. In terms of domain architecture, LOB spans 50–152; that stretch reads SPCGACKFLR…AELSVVQSQL (103 aa). The segment at 221–248 is disordered; that stretch reads LEHSLQPMPPHQQRRGDYQHEDEEESGA.

It belongs to the LOB domain-containing protein family. Expressed in roots and flowers.

In Arabidopsis thaliana (Mouse-ear cress), this protein is LOB domain-containing protein 20 (LBD20).